The sequence spans 397 residues: 3-ketoacyl-CoA thiolase, mitochondrial (397 aa).

A mitochondrion; not cleaved-targeting transit peptide spans 1–16 (MALLRGVFVVAAKRTP). An N6-acetyllysine; alternate modification is found at Lys25. Lys25 is modified (N6-succinyllysine; alternate). Lys45 carries the post-translational modification N6-succinyllysine. The active-site Acyl-thioester intermediate is Cys92. Position 119 is a phosphothreonine (Thr119). Position 121 is a phosphoserine (Ser121). Tyr127 is modified (phosphotyrosine). A Phosphothreonine modification is found at Thr136. At Lys137 the chain carries N6-acetyllysine; alternate. Lys137 is subject to N6-succinyllysine; alternate. Ser140 is subject to Phosphoserine. Residues Lys143, Lys171, Lys191, and Lys209 each carry the N6-acetyllysine; alternate modification. Lys143, Lys171, Lys191, and Lys209 each carry N6-succinyllysine; alternate. An N6-succinyllysine mark is found at Lys211, Lys212, and Lys214. CoA-binding residues include Arg224 and Thr227. Lys234 carries the post-translational modification N6-acetyllysine; alternate. N6-succinyllysine; alternate is present on Lys234. The residue at position 240 (Lys240) is an N6-succinyllysine. Lys241 is subject to N6-acetyllysine. Ser251 is a binding site for CoA. Residues Lys269 and Lys270 each carry the N6-acetyllysine modification. An N6-acetyllysine; alternate modification is found at Lys305. An N6-succinyllysine; alternate modification is found at Lys305. The residue at position 310 (Ser310) is a Phosphoserine. Lys312 bears the N6-acetyllysine; alternate mark. Lys312 carries the N6-succinyllysine; alternate modification. Residue Ser333 is modified to Phosphoserine. An N6-acetyllysine mark is found at Lys340 and Lys375. The active-site Proton donor/acceptor is Cys382.

Belongs to the thiolase-like superfamily. Thiolase family. Homotetramer. Interacts with BNIP3.

Its subcellular location is the mitochondrion. It catalyses the reaction an acyl-CoA + acetyl-CoA = a 3-oxoacyl-CoA + CoA. It carries out the reaction 2 acetyl-CoA = acetoacetyl-CoA + CoA. The enzyme catalyses acetyl-CoA + H2O = acetate + CoA + H(+). The catalysed reaction is propanoyl-CoA + H2O = propanoate + CoA + H(+). It catalyses the reaction butanoyl-CoA + H2O = butanoate + CoA + H(+). It carries out the reaction hexanoyl-CoA + H2O = hexanoate + CoA + H(+). The enzyme catalyses octanoyl-CoA + H2O = octanoate + CoA + H(+). The catalysed reaction is decanoyl-CoA + H2O = decanoate + CoA + H(+). It catalyses the reaction dodecanoyl-CoA + H2O = dodecanoate + CoA + H(+). It carries out the reaction tetradecanoyl-CoA + H2O = tetradecanoate + CoA + H(+). The enzyme catalyses hexadecanoyl-CoA + H2O = hexadecanoate + CoA + H(+). It functions in the pathway lipid metabolism; fatty acid beta-oxidation. Its function is as follows. In the production of energy from fats, this is one of the enzymes that catalyzes the last step of the mitochondrial beta-oxidation pathway, an aerobic process breaking down fatty acids into acetyl-CoA. Using free coenzyme A/CoA, catalyzes the thiolytic cleavage of medium- to long-chain unbranched 3-oxoacyl-CoAs into acetyl-CoA and a fatty acyl-CoA shortened by two carbon atoms. Also catalyzes the condensation of two acetyl-CoA molecules into acetoacetyl-CoA and could be involved in the production of ketone bodies. Also displays hydrolase activity on various fatty acyl-CoAs. Thereby, could be responsible for the production of acetate in a side reaction to beta-oxidation. Abolishes BNIP3-mediated apoptosis and mitochondrial damage. The sequence is that of 3-ketoacyl-CoA thiolase, mitochondrial (ACAA2) from Homo sapiens (Human).